Here is an 867-residue protein sequence, read N- to C-terminus: Leucine--tRNA ligase (867 aa).

Positions 42-52 (PYPSGNLHMGH) match the 'HIGH' region motif. Positions 625–629 (KMSKS) match the 'KMSKS' region motif. Lys-628 contributes to the ATP binding site.

It belongs to the class-I aminoacyl-tRNA synthetase family.

It is found in the cytoplasm. It carries out the reaction tRNA(Leu) + L-leucine + ATP = L-leucyl-tRNA(Leu) + AMP + diphosphate. The protein is Leucine--tRNA ligase of Blochmanniella floridana.